The primary structure comprises 356 residues: Probable butyrate kinase (356 aa).

This sequence belongs to the acetokinase family.

It localises to the cytoplasm. The catalysed reaction is butanoate + ATP = butanoyl phosphate + ADP. The sequence is that of Probable butyrate kinase from Clostridium perfringens (strain SM101 / Type A).